The following is a 241-amino-acid chain: Phosphoadenosine 5'-phosphosulfate reductase (241 aa).

Catalysis depends on C235, which acts as the Nucleophile; cysteine thiosulfonate intermediate.

Belongs to the PAPS reductase family. CysH subfamily.

It is found in the cytoplasm. The catalysed reaction is [thioredoxin]-disulfide + sulfite + adenosine 3',5'-bisphosphate + 2 H(+) = [thioredoxin]-dithiol + 3'-phosphoadenylyl sulfate. The protein operates within sulfur metabolism; hydrogen sulfide biosynthesis; sulfite from sulfate: step 3/3. Functionally, catalyzes the formation of sulfite from phosphoadenosine 5'-phosphosulfate (PAPS) using thioredoxin as an electron donor. The protein is Phosphoadenosine 5'-phosphosulfate reductase of Xanthomonas oryzae pv. oryzae (strain MAFF 311018).